The following is a 305-amino-acid chain: Nucleotide-binding protein Mjls_2437 (305 aa).

28 to 35 (GLSGAGRG) is an ATP binding site. Residue 79–82 (DVRS) participates in GTP binding.

This sequence belongs to the RapZ-like family.

Displays ATPase and GTPase activities. This is Nucleotide-binding protein Mjls_2437 from Mycobacterium sp. (strain JLS).